The chain runs to 1240 residues: DNA-directed RNA polymerase subunit beta (1240 aa).

This sequence belongs to the RNA polymerase beta chain family. In terms of assembly, the RNAP catalytic core consists of 2 alpha, 1 beta, 1 beta' and 1 omega subunit. When a sigma factor is associated with the core the holoenzyme is formed, which can initiate transcription.

It catalyses the reaction RNA(n) + a ribonucleoside 5'-triphosphate = RNA(n+1) + diphosphate. Functionally, DNA-dependent RNA polymerase catalyzes the transcription of DNA into RNA using the four ribonucleoside triphosphates as substrates. The sequence is that of DNA-directed RNA polymerase subunit beta from Phytoplasma australiense.